Here is a 328-residue protein sequence, read N- to C-terminus: Phenylalanine--tRNA ligase alpha subunit (328 aa).

Mg(2+) is bound at residue E245.

This sequence belongs to the class-II aminoacyl-tRNA synthetase family. Phe-tRNA synthetase alpha subunit type 1 subfamily. As to quaternary structure, tetramer of two alpha and two beta subunits. Requires Mg(2+) as cofactor.

The protein resides in the cytoplasm. It carries out the reaction tRNA(Phe) + L-phenylalanine + ATP = L-phenylalanyl-tRNA(Phe) + AMP + diphosphate + H(+). In Helicobacter pylori (strain HPAG1), this protein is Phenylalanine--tRNA ligase alpha subunit.